A 273-amino-acid chain; its full sequence is Dermonecrotic toxin LamSicTox-alphaIC1 (273 aa).

The active site involves His-5. Glu-25 and Asp-27 together coordinate Mg(2+). The active-site Nucleophile is His-41. 2 disulfide bridges follow: Cys-45-Cys-51 and Cys-47-Cys-190. Asp-85 contacts Mg(2+).

This sequence belongs to the arthropod phospholipase D family. Class II subfamily. The cofactor is Mg(2+). In terms of tissue distribution, expressed by the venom gland.

It is found in the secreted. It catalyses the reaction an N-(acyl)-sphingosylphosphocholine = an N-(acyl)-sphingosyl-1,3-cyclic phosphate + choline. The catalysed reaction is an N-(acyl)-sphingosylphosphoethanolamine = an N-(acyl)-sphingosyl-1,3-cyclic phosphate + ethanolamine. The enzyme catalyses a 1-acyl-sn-glycero-3-phosphocholine = a 1-acyl-sn-glycero-2,3-cyclic phosphate + choline. It carries out the reaction a 1-acyl-sn-glycero-3-phosphoethanolamine = a 1-acyl-sn-glycero-2,3-cyclic phosphate + ethanolamine. In terms of biological role, dermonecrotic toxins cleave the phosphodiester linkage between the phosphate and headgroup of certain phospholipids (sphingolipid and lysolipid substrates), forming an alcohol (often choline) and a cyclic phosphate. This toxin acts on sphingomyelin (SM). It may also act on ceramide phosphoethanolamine (CPE), lysophosphatidylcholine (LPC) and lysophosphatidylethanolamine (LPE), but not on lysophosphatidylserine (LPS), and lysophosphatidylglycerol (LPG). It acts by transphosphatidylation, releasing exclusively cyclic phosphate products as second products. Induces dermonecrosis, hemolysis, increased vascular permeability, edema, inflammatory response, and platelet aggregation. The protein is Dermonecrotic toxin LamSicTox-alphaIC1 of Loxosceles amazonica (Recluse spider).